Here is a 153-residue protein sequence, read N- to C-terminus: SsrA-binding protein (153 aa).

Belongs to the SmpB family.

It localises to the cytoplasm. Required for rescue of stalled ribosomes mediated by trans-translation. Binds to transfer-messenger RNA (tmRNA), required for stable association of tmRNA with ribosomes. tmRNA and SmpB together mimic tRNA shape, replacing the anticodon stem-loop with SmpB. tmRNA is encoded by the ssrA gene; the 2 termini fold to resemble tRNA(Ala) and it encodes a 'tag peptide', a short internal open reading frame. During trans-translation Ala-aminoacylated tmRNA acts like a tRNA, entering the A-site of stalled ribosomes, displacing the stalled mRNA. The ribosome then switches to translate the ORF on the tmRNA; the nascent peptide is terminated with the 'tag peptide' encoded by the tmRNA and targeted for degradation. The ribosome is freed to recommence translation, which seems to be the essential function of trans-translation. The protein is SsrA-binding protein of Cytophaga hutchinsonii (strain ATCC 33406 / DSM 1761 / CIP 103989 / NBRC 15051 / NCIMB 9469 / D465).